A 51-amino-acid polypeptide reads, in one-letter code: Large ribosomal subunit protein eL39 (51 aa).

Residues 1–22 (MAAQKSFRIKQKMAKAKKQNRP) are disordered. Residues 7-20 (FRIKQKMAKAKKQN) show a composition bias toward basic residues.

The protein belongs to the eukaryotic ribosomal protein eL39 family. Component of the large ribosomal subunit (LSU). Mature yeast ribosomes consist of a small (40S) and a large (60S) subunit. The 40S small subunit contains 1 molecule of ribosomal RNA (18S rRNA) and 33 different proteins (encoded by 57 genes). The large 60S subunit contains 3 rRNA molecules (25S, 5.8S and 5S rRNA) and 46 different proteins (encoded by 81 genes). eL39 interacts with YIH1.

Its subcellular location is the cytoplasm. Component of the ribosome, a large ribonucleoprotein complex responsible for the synthesis of proteins in the cell. The small ribosomal subunit (SSU) binds messenger RNAs (mRNAs) and translates the encoded message by selecting cognate aminoacyl-transfer RNA (tRNA) molecules. The large subunit (LSU) contains the ribosomal catalytic site termed the peptidyl transferase center (PTC), which catalyzes the formation of peptide bonds, thereby polymerizing the amino acids delivered by tRNAs into a polypeptide chain. The nascent polypeptides leave the ribosome through a tunnel in the LSU and interact with protein factors that function in enzymatic processing, targeting, and the membrane insertion of nascent chains at the exit of the ribosomal tunnel. This Saccharomyces cerevisiae (strain ATCC 204508 / S288c) (Baker's yeast) protein is Large ribosomal subunit protein eL39.